A 505-amino-acid chain; its full sequence is uncharacterized protein (505 aa).

A signal peptide spans 1–22 (MAILKSALVGFICFLHFFIVNA). 2 N-linked (GlcNAc...) asparagine glycosylation sites follow: N25 and N114. Transmembrane regions (helical) follow at residues 181–201 (LFLN…WSFI), 216–236 (ISGV…YFYF), 266–286 (FLLL…GSLL), 291–311 (ILAG…FISP), and 318–338 (VILF…LWIV). A glycan (N-linked (GlcNAc...) asparagine) is linked at N342. Helical transmembrane passes span 365–385 (IVIC…AILI) and 400–420 (LLWF…MLTI). N454 carries an N-linked (GlcNAc...) asparagine glycan.

Belongs to the LU7TM family.

It is found in the membrane. This is an uncharacterized protein from Schizosaccharomyces pombe (strain 972 / ATCC 24843) (Fission yeast).